A 324-amino-acid polypeptide reads, in one-letter code: Delta-aminolevulinic acid dehydratase (324 aa).

Zn(2+)-binding residues include Cys-120, Cys-122, and Cys-130. Lys-195 acts as the Schiff-base intermediate with substrate in catalysis. 5-aminolevulinate is bound by residues Arg-205 and Arg-216. Glu-232 contributes to the Mg(2+) binding site. Lys-247 functions as the Schiff-base intermediate with substrate in the catalytic mechanism. Ser-273 and Tyr-312 together coordinate 5-aminolevulinate.

This sequence belongs to the ALAD family. As to quaternary structure, homooctamer. Zn(2+) serves as cofactor.

It catalyses the reaction 2 5-aminolevulinate = porphobilinogen + 2 H2O + H(+). It participates in porphyrin-containing compound metabolism; protoporphyrin-IX biosynthesis; coproporphyrinogen-III from 5-aminolevulinate: step 1/4. Its activity is regulated as follows. Allosteric enzyme. Stimulated by magnesium ions. Its function is as follows. Catalyzes an early step in the biosynthesis of tetrapyrroles. Binds two molecules of 5-aminolevulinate per subunit, each at a distinct site, and catalyzes their condensation to form porphobilinogen. This Escherichia coli (strain K12) protein is Delta-aminolevulinic acid dehydratase (hemB).